A 777-amino-acid chain; its full sequence is 5-methyltetrahydropteroyltriglutamate--homocysteine methyltransferase (777 aa).

5-methyltetrahydropteroyltri-L-glutamate contacts are provided by residues arginine 17 to lysine 20 and lysine 132. L-homocysteine-binding positions include isoleucine 455–serine 457 and glutamate 508. Residues isoleucine 455 to serine 457 and glutamate 508 each bind L-methionine. 5-methyltetrahydropteroyltri-L-glutamate contacts are provided by residues arginine 539–cysteine 540 and tryptophan 585. Residue aspartate 623 coordinates L-homocysteine. Aspartate 623 contacts L-methionine. Glutamate 629 is a binding site for 5-methyltetrahydropteroyltri-L-glutamate. Zn(2+) is bound by residues histidine 665, cysteine 667, and glutamate 689. Histidine 718 (proton donor) is an active-site residue. Position 750 (cysteine 750) interacts with Zn(2+).

The protein belongs to the vitamin-B12 independent methionine synthase family. Zn(2+) serves as cofactor.

The enzyme catalyses 5-methyltetrahydropteroyltri-L-glutamate + L-homocysteine = tetrahydropteroyltri-L-glutamate + L-methionine. Its pathway is amino-acid biosynthesis; L-methionine biosynthesis via de novo pathway; L-methionine from L-homocysteine (MetE route): step 1/1. Its function is as follows. Catalyzes the transfer of a methyl group from 5-methyltetrahydrofolate to homocysteine resulting in methionine formation. This chain is 5-methyltetrahydropteroyltriglutamate--homocysteine methyltransferase, found in Caulobacter vibrioides (strain ATCC 19089 / CIP 103742 / CB 15) (Caulobacter crescentus).